Consider the following 361-residue polypeptide: Lactate-binding periplasmic protein TTHA0766 (361 aa).

A signal peptide (tat-type signal) is located at residues 1-22; the sequence is MKRVSRRAFLRRLGVGVAATAA. The substrate site is built by Tyr-101, Asn-158, and Arg-178. Asn-158 is a Ca(2+) binding site. Ca(2+)-binding residues include Asp-216, Phe-217, and Gln-247. Substrate-binding positions include Phe-217 and 247–250; that span reads QPVD.

The protein belongs to the bacterial solute-binding protein 7 family. Homodimer. The complex comprises the extracytoplasmic solute receptor protein TTHA0766, and the two putative transmembrane proteins TTHA0767 and TTHA0768.

It is found in the periplasm. Functionally, part of the tripartite ATP-independent periplasmic (TRAP) transport system involved in the uptake of lactate. This protein specifically binds L-lactate. This Thermus thermophilus (strain ATCC 27634 / DSM 579 / HB8) protein is Lactate-binding periplasmic protein TTHA0766.